A 349-amino-acid chain; its full sequence is Ribosomal RNA large subunit methyltransferase M (349 aa).

S-adenosyl-L-methionine contacts are provided by residues 216–219 (APGG), Asp235, Asp255, and Asp271. The Proton acceptor role is filled by Lys300.

This sequence belongs to the class I-like SAM-binding methyltransferase superfamily. RNA methyltransferase RlmE family. RlmM subfamily. In terms of assembly, monomer.

Its subcellular location is the cytoplasm. The enzyme catalyses cytidine(2498) in 23S rRNA + S-adenosyl-L-methionine = 2'-O-methylcytidine(2498) in 23S rRNA + S-adenosyl-L-homocysteine + H(+). Catalyzes the 2'-O-methylation at nucleotide C2498 in 23S rRNA. The polypeptide is Ribosomal RNA large subunit methyltransferase M (Saccharophagus degradans (strain 2-40 / ATCC 43961 / DSM 17024)).